The primary structure comprises 188 residues: D-glycero-beta-D-manno-heptose-1,7-bisphosphate 7-phosphatase (188 aa).

Asp-11 (nucleophile) is an active-site residue. Residues Asp-11 and Asp-13 each contribute to the Mg(2+) site. Substrate contacts are provided by residues 11 to 13, 19 to 22, and 53 to 56; these read DRD, DHGY, and TNQS. Catalysis depends on Asp-13, which acts as the Proton donor. 4 residues coordinate Zn(2+): Cys-92, His-94, Cys-107, and Cys-109. 110 to 111 is a substrate binding site; the sequence is RK. Mg(2+) is bound by residues Asp-136 and Lys-137. Lys-137 serves as a coordination point for substrate.

It belongs to the GmhB family. Monomer. Mg(2+) is required as a cofactor. Zn(2+) serves as cofactor.

It localises to the cytoplasm. The enzyme catalyses D-glycero-beta-D-manno-heptose 1,7-bisphosphate + H2O = D-glycero-beta-D-manno-heptose 1-phosphate + phosphate. It participates in nucleotide-sugar biosynthesis; ADP-L-glycero-beta-D-manno-heptose biosynthesis; ADP-L-glycero-beta-D-manno-heptose from D-glycero-beta-D-manno-heptose 7-phosphate: step 2/4. It functions in the pathway bacterial outer membrane biogenesis; LPS core biosynthesis. Its function is as follows. Converts the D-glycero-beta-D-manno-heptose 1,7-bisphosphate intermediate into D-glycero-beta-D-manno-heptose 1-phosphate by removing the phosphate group at the C-7 position in vitro. Also catalyzes the dephosphorylation of D-glycero-alpha-D-manno-heptose 1,7-bisphosphate and 2-deoxy-D-manno-2-octoulosonate-8-phosphate in vitro. The chain is D-glycero-beta-D-manno-heptose-1,7-bisphosphate 7-phosphatase (gmhB) from Salmonella typhi.